The primary structure comprises 264 residues: Thymidylate synthase (264 aa).

A dUMP-binding site is contributed by Arg-21. His-51 serves as a coordination point for (6R)-5,10-methylene-5,6,7,8-tetrahydrofolate. 126–127 (RR) contributes to the dUMP binding site. Cys-146 functions as the Nucleophile in the catalytic mechanism. DUMP is bound by residues 166–169 (RSCD), Asn-177, and 207–209 (HLY). Residue Asp-169 coordinates (6R)-5,10-methylene-5,6,7,8-tetrahydrofolate. Ala-263 is a (6R)-5,10-methylene-5,6,7,8-tetrahydrofolate binding site.

It belongs to the thymidylate synthase family. Bacterial-type ThyA subfamily. As to quaternary structure, homodimer.

The protein localises to the cytoplasm. It carries out the reaction dUMP + (6R)-5,10-methylene-5,6,7,8-tetrahydrofolate = 7,8-dihydrofolate + dTMP. It participates in pyrimidine metabolism; dTTP biosynthesis. In terms of biological role, catalyzes the reductive methylation of 2'-deoxyuridine-5'-monophosphate (dUMP) to 2'-deoxythymidine-5'-monophosphate (dTMP) while utilizing 5,10-methylenetetrahydrofolate (mTHF) as the methyl donor and reductant in the reaction, yielding dihydrofolate (DHF) as a by-product. This enzymatic reaction provides an intracellular de novo source of dTMP, an essential precursor for DNA biosynthesis. This Salmonella typhimurium (strain LT2 / SGSC1412 / ATCC 700720) protein is Thymidylate synthase.